We begin with the raw amino-acid sequence, 172 residues long: Hemagglutinin/amebocyte aggregation factor (172 aa).

A signal peptide spans 1–19 (MNSPAIVIIIFSTLTFSEA). 4 tandem repeats follow at residues 21–25 (VNDWD), 50–54 (EDRRW), 73–77 (VNDWD), and 102–106 (EDRRW). Cystine bridges form between Cys-32/Cys-58, Cys-67/Cys-172, Cys-84/Cys-110, Cys-111/Cys-117, and Cys-123/Cys-167. 2 consecutive repeat copies span residues 129–133 (VNSWD) and 158–162 (EDRRW).

This sequence belongs to the dermatopontin family.

Its subcellular location is the secreted. In terms of biological role, possesses the property of inducing both aggregation of amebocytes and agglutination of erythrocytes. This Limulus polyphemus (Atlantic horseshoe crab) protein is Hemagglutinin/amebocyte aggregation factor.